The sequence spans 467 residues: 3-isopropylmalate dehydratase large subunit (467 aa).

3 residues coordinate [4Fe-4S] cluster: C348, C408, and C411. The tract at residues 417–445 is disordered; that stretch reads DQLTPGERSASTSNRNFEGRQGKGGRTHL.

It belongs to the aconitase/IPM isomerase family. LeuC type 1 subfamily. As to quaternary structure, heterodimer of LeuC and LeuD. [4Fe-4S] cluster is required as a cofactor.

The enzyme catalyses (2R,3S)-3-isopropylmalate = (2S)-2-isopropylmalate. Its pathway is amino-acid biosynthesis; L-leucine biosynthesis; L-leucine from 3-methyl-2-oxobutanoate: step 2/4. Its function is as follows. Catalyzes the isomerization between 2-isopropylmalate and 3-isopropylmalate, via the formation of 2-isopropylmaleate. The protein is 3-isopropylmalate dehydratase large subunit of Saccharopolyspora erythraea (strain ATCC 11635 / DSM 40517 / JCM 4748 / NBRC 13426 / NCIMB 8594 / NRRL 2338).